Reading from the N-terminus, the 179-residue chain is tRNA (cytidine(56)-2'-O)-methyltransferase (179 aa).

S-adenosyl-L-methionine is bound by residues leucine 82, 112-116 (GAEKV), and 130-137 (VGNQPHSE).

The protein belongs to the aTrm56 family. Homodimer.

It localises to the cytoplasm. The enzyme catalyses cytidine(56) in tRNA + S-adenosyl-L-methionine = 2'-O-methylcytidine(56) in tRNA + S-adenosyl-L-homocysteine + H(+). Its function is as follows. Specifically catalyzes the AdoMet-dependent 2'-O-ribose methylation of cytidine at position 56 in tRNAs. The chain is tRNA (cytidine(56)-2'-O)-methyltransferase from Methanococcus maripaludis (strain C5 / ATCC BAA-1333).